The following is a 334-amino-acid chain: Holliday junction branch migration complex subunit RuvB (334 aa).

Residues 1–182 (MNERMVDQSM…FGVHLRLEYY (182 aa)) form a large ATPase domain (RuvB-L) region. Residues leucine 21, arginine 22, glycine 63, lysine 66, threonine 67, threonine 68, 129 to 131 (EDF), arginine 172, tyrosine 182, and arginine 219 each bind ATP. Threonine 67 contributes to the Mg(2+) binding site. The segment at 183-253 (NESDLKEIII…TTKHALGLLQ (71 aa)) is small ATPAse domain (RuvB-S). Residues 256-334 (QHGLDYIDHK…HFAKSNEERE (79 aa)) are head domain (RuvB-H). Residues arginine 292, arginine 311, and arginine 316 each contribute to the DNA site.

Belongs to the RuvB family. Homohexamer. Forms an RuvA(8)-RuvB(12)-Holliday junction (HJ) complex. HJ DNA is sandwiched between 2 RuvA tetramers; dsDNA enters through RuvA and exits via RuvB. An RuvB hexamer assembles on each DNA strand where it exits the tetramer. Each RuvB hexamer is contacted by two RuvA subunits (via domain III) on 2 adjacent RuvB subunits; this complex drives branch migration. In the full resolvosome a probable DNA-RuvA(4)-RuvB(12)-RuvC(2) complex forms which resolves the HJ.

It localises to the cytoplasm. The enzyme catalyses ATP + H2O = ADP + phosphate + H(+). Its function is as follows. The RuvA-RuvB-RuvC complex processes Holliday junction (HJ) DNA during genetic recombination and DNA repair, while the RuvA-RuvB complex plays an important role in the rescue of blocked DNA replication forks via replication fork reversal (RFR). RuvA specifically binds to HJ cruciform DNA, conferring on it an open structure. The RuvB hexamer acts as an ATP-dependent pump, pulling dsDNA into and through the RuvAB complex. RuvB forms 2 homohexamers on either side of HJ DNA bound by 1 or 2 RuvA tetramers; 4 subunits per hexamer contact DNA at a time. Coordinated motions by a converter formed by DNA-disengaged RuvB subunits stimulates ATP hydrolysis and nucleotide exchange. Immobilization of the converter enables RuvB to convert the ATP-contained energy into a lever motion, pulling 2 nucleotides of DNA out of the RuvA tetramer per ATP hydrolyzed, thus driving DNA branch migration. The RuvB motors rotate together with the DNA substrate, which together with the progressing nucleotide cycle form the mechanistic basis for DNA recombination by continuous HJ branch migration. Branch migration allows RuvC to scan DNA until it finds its consensus sequence, where it cleaves and resolves cruciform DNA. In Staphylococcus aureus (strain bovine RF122 / ET3-1), this protein is Holliday junction branch migration complex subunit RuvB.